We begin with the raw amino-acid sequence, 274 residues long: tRNA-cytidine(32) 2-sulfurtransferase (274 aa).

The PP-loop motif motif lies at 40–45; it reads SGGKDS. [4Fe-4S] cluster-binding residues include C115, C118, and C206.

The protein belongs to the TtcA family. Homodimer. The cofactor is Mg(2+). It depends on [4Fe-4S] cluster as a cofactor.

The protein localises to the cytoplasm. The catalysed reaction is cytidine(32) in tRNA + S-sulfanyl-L-cysteinyl-[cysteine desulfurase] + AH2 + ATP = 2-thiocytidine(32) in tRNA + L-cysteinyl-[cysteine desulfurase] + A + AMP + diphosphate + H(+). It participates in tRNA modification. Functionally, catalyzes the ATP-dependent 2-thiolation of cytidine in position 32 of tRNA, to form 2-thiocytidine (s(2)C32). The sulfur atoms are provided by the cysteine/cysteine desulfurase (IscS) system. The polypeptide is tRNA-cytidine(32) 2-sulfurtransferase (Pseudomonas fluorescens (strain ATCC BAA-477 / NRRL B-23932 / Pf-5)).